Consider the following 314-residue polypeptide: Nodulation protein D 1 (314 aa).

Positions 6-63 (LDLNLLVALDALMTERNLTAAARQINLSQPAMSAAIARLRSYFRDELFTMRGRELVPT) constitute an HTH lysR-type domain. A DNA-binding region (H-T-H motif) is located at residues 23–42 (LTAAARQINLSQPAMSAAIA).

It belongs to the LysR transcriptional regulatory family.

NodD regulates the expression of the nodABCFE genes which encode other nodulation proteins. NodD is also a negative regulator of its own expression. Binds flavonoids as inducers. In Bradyrhizobium elkanii, this protein is Nodulation protein D 1 (nodD1).